The primary structure comprises 316 residues: Ribosomal RNA small subunit methyltransferase H (316 aa).

S-adenosyl-L-methionine-binding positions include 37–39 (GGH), Asp56, Phe83, Asp106, and His113. Positions 276–316 (PILPSEEETKENPASRSAKLRVLRKTKSADKKYKKENSKEE) are disordered. The span at 302-316 (KSADKKYKKENSKEE) shows a compositional bias: basic and acidic residues.

It belongs to the methyltransferase superfamily. RsmH family.

It localises to the cytoplasm. It catalyses the reaction cytidine(1402) in 16S rRNA + S-adenosyl-L-methionine = N(4)-methylcytidine(1402) in 16S rRNA + S-adenosyl-L-homocysteine + H(+). Its function is as follows. Specifically methylates the N4 position of cytidine in position 1402 (C1402) of 16S rRNA. This is Ribosomal RNA small subunit methyltransferase H from Leptospira borgpetersenii serovar Hardjo-bovis (strain L550).